Reading from the N-terminus, the 317-residue chain is Acetylglutamate kinase (317 aa).

Substrate-binding positions include 70 to 71, R92, and N191; that span reads GG.

Belongs to the acetylglutamate kinase family. ArgB subfamily.

It is found in the cytoplasm. The catalysed reaction is N-acetyl-L-glutamate + ATP = N-acetyl-L-glutamyl 5-phosphate + ADP. The protein operates within amino-acid biosynthesis; L-arginine biosynthesis; N(2)-acetyl-L-ornithine from L-glutamate: step 2/4. Its function is as follows. Catalyzes the ATP-dependent phosphorylation of N-acetyl-L-glutamate. The protein is Acetylglutamate kinase of Corynebacterium glutamicum (strain R).